The following is a 417-amino-acid chain: UDP-N-acetylglucosamine 1-carboxyvinyltransferase 2 (417 aa).

22 to 23 provides a ligand contact to phosphoenolpyruvate; the sequence is KN. Position 92 (R92) interacts with UDP-N-acetyl-alpha-D-glucosamine. C116 (proton donor) is an active-site residue. Position 116 is a 2-(S-cysteinyl)pyruvic acid O-phosphothioketal (C116). UDP-N-acetyl-alpha-D-glucosamine is bound by residues 121 to 125, D305, and I327; that span reads RPIDL.

This sequence belongs to the EPSP synthase family. MurA subfamily.

The protein resides in the cytoplasm. It carries out the reaction phosphoenolpyruvate + UDP-N-acetyl-alpha-D-glucosamine = UDP-N-acetyl-3-O-(1-carboxyvinyl)-alpha-D-glucosamine + phosphate. It participates in cell wall biogenesis; peptidoglycan biosynthesis. Functionally, cell wall formation. Adds enolpyruvyl to UDP-N-acetylglucosamine. This Caldanaerobacter subterraneus subsp. tengcongensis (strain DSM 15242 / JCM 11007 / NBRC 100824 / MB4) (Thermoanaerobacter tengcongensis) protein is UDP-N-acetylglucosamine 1-carboxyvinyltransferase 2.